We begin with the raw amino-acid sequence, 275 residues long: Phosphite transport system permease protein PtxC (275 aa).

5 helical membrane-spanning segments follow: residues 30–50 (LGQV…VGLL), 88–108 (LAMS…VAFV), 136–156 (LIMG…GVLA), 221–241 (ASTV…MGSL), and 249–269 (VAAI…FSGV). Positions 84–267 (LIDTLAMSIA…AMVTLVDAFS (184 aa)) constitute an ABC transmembrane type-1 domain.

It belongs to the binding-protein-dependent transport system permease family.

It is found in the cell inner membrane. Its function is as follows. Probably forms part of a binding-protein-dependent phosphite transporter. Probably responsible for the translocation of the substrate across the membrane. The sequence is that of Phosphite transport system permease protein PtxC (ptxC) from Stutzerimonas stutzeri (Pseudomonas stutzeri).